The chain runs to 61 residues: ERMES regulator 1 (61 aa).

Over 1–20 (MLPNLRRIFASFRTEEEERS) the chain is Mitochondrial intermembrane. Residues 21–43 (YSRKAFFHLIGYITCSVLFSWLV) form a helical membrane-spanning segment. Residues 44 to 61 (RKKVISSPVVSSPIHALS) are Cytoplasmic-facing.

Belongs to the EMR1 family. Interacts with the ER-mitochondria encounter structure (ERMES) complex. Interacts with mdm12. Interacts with mdm34.

Its subcellular location is the mitochondrion outer membrane. Functionally, mediates the formation of endoplasmic reticulum (ER)-mitochondria encounter structure (ERMES) foci, thereby contributing to the formation of ER-mitochondrial contact sites. In Schizosaccharomyces pombe (strain 972 / ATCC 24843) (Fission yeast), this protein is ERMES regulator 1.